A 483-amino-acid polypeptide reads, in one-letter code: Probable glycosyltransferase 6 (483 aa).

The Cytoplasmic portion of the chain corresponds to 1–40; it reads MAASETAPFGVSAASKGGGGVAGARAQHGQLAVAGRVHDA. A helical; Signal-anchor for type II membrane protein transmembrane segment spans residues 41–61; that stretch reads LVFAAGAVAAVLVLLATASFL. Residues 62–483 are Lumenal-facing; that stretch reads SPMPVTNLVA…PLPFDYPAAR (422 aa). A glycan (N-linked (GlcNAc...) asparagine) is linked at N144.

Belongs to the glycosyltransferase 34 family.

It is found in the golgi apparatus membrane. Its function is as follows. Probable glycosyltransferase that may be involved in the biosynthesis of xyloglucan. The polypeptide is Probable glycosyltransferase 6 (Oryza sativa subsp. japonica (Rice)).